The following is a 210-amino-acid chain: Probable glutathione S-transferase gst-36 (210 aa).

The region spanning 2 to 79 (PHFKFYYFDV…YLGHQFHRAG (78 aa)) is the GST N-terminal domain. Residues Tyr-8, Trp-39, Lys-43, 49 to 51 (GQV), and 63 to 64 (QT) each bind glutathione. In terms of domain architecture, GST C-terminal spans 81-210 (NAVDCARLDM…YVSQRKATPA (130 aa)).

It belongs to the GST superfamily. Sigma family.

It catalyses the reaction RX + glutathione = an S-substituted glutathione + a halide anion + H(+). Conjugation of reduced glutathione to a wide number of exogenous and endogenous hydrophobic electrophiles. The sequence is that of Probable glutathione S-transferase gst-36 (gst-36) from Caenorhabditis elegans.